Here is a 388-residue protein sequence, read N- to C-terminus: Succinate--CoA ligase [ADP-forming] subunit beta (388 aa).

Positions 9-244 (KQLFAEYGLP…PSQEDEREAH (236 aa)) constitute an ATP-grasp domain. ATP is bound by residues K46, 53 to 55 (GRG), E99, S102, and E107. The Mg(2+) site is built by N199 and D213. Residues N264 and 321–323 (GIV) each bind substrate.

It belongs to the succinate/malate CoA ligase beta subunit family. As to quaternary structure, heterotetramer of two alpha and two beta subunits. Requires Mg(2+) as cofactor.

The enzyme catalyses succinate + ATP + CoA = succinyl-CoA + ADP + phosphate. It carries out the reaction GTP + succinate + CoA = succinyl-CoA + GDP + phosphate. The protein operates within carbohydrate metabolism; tricarboxylic acid cycle; succinate from succinyl-CoA (ligase route): step 1/1. Its function is as follows. Succinyl-CoA synthetase functions in the citric acid cycle (TCA), coupling the hydrolysis of succinyl-CoA to the synthesis of either ATP or GTP and thus represents the only step of substrate-level phosphorylation in the TCA. The beta subunit provides nucleotide specificity of the enzyme and binds the substrate succinate, while the binding sites for coenzyme A and phosphate are found in the alpha subunit. The chain is Succinate--CoA ligase [ADP-forming] subunit beta from Aliivibrio salmonicida (strain LFI1238) (Vibrio salmonicida (strain LFI1238)).